A 114-amino-acid chain; its full sequence is Large ribosomal subunit protein bL19 (114 aa).

The protein belongs to the bacterial ribosomal protein bL19 family.

In terms of biological role, this protein is located at the 30S-50S ribosomal subunit interface and may play a role in the structure and function of the aminoacyl-tRNA binding site. The sequence is that of Large ribosomal subunit protein bL19 from Clavibacter michiganensis subsp. michiganensis (strain NCPPB 382).